The primary structure comprises 380 residues: M-protease (380 aa).

An N-terminal signal peptide occupies residues 1 to 27 (MKKPLGKIVASTALLISVAFSSSIASA). Residues 28–111 (AEEAKEKYLI…IEEDAEVTTM (84 aa)) constitute a propeptide that is removed on maturation. The 78-residue stretch at 34–111 (KYLIGFNEQE…IEEDAEVTTM (78 aa)) folds into the Inhibitor I9 domain. Ca(2+) is bound at residue Gln113. A Peptidase S8 domain is found at 116–379 (PWGISRVQAP…SGLVNAEAAT (264 aa)). Catalysis depends on Asp143, which acts as the Charge relay system. Residue Asp151 coordinates Ca(2+). The Charge relay system role is filled by His173. Residues Leu184, Asn186, Ile188, Val190, Ala274, Tyr276, Ala279, and Asp302 each coordinate Ca(2+). The Charge relay system role is filled by Ser326.

It belongs to the peptidase S8 family. In terms of assembly, monomer. It depends on Ca(2+) as a cofactor.

The protein resides in the secreted. Activity is inhibited by phenylmethylsulfonyl fluoride and chymostatin. In terms of biological role, alkaline serine protease that cleaves various substrates, including N-succinyl-Ala-Ala-Pro-Phe-pNA, N-succinyl-Ala-Ala-Pro-MetpNA, oxidized insulin B chain, casein, hemoglobin and scleroproteins, such as keratin, alpha-keratin and elastin. The protein is M-protease (aprE) of Shouchella clausii (strain KSM-K16) (Alkalihalobacillus clausii).